Consider the following 250-residue polypeptide: Ditrans,polycis-undecaprenyl-diphosphate synthase ((2E,6E)-farnesyl-diphosphate specific) (250 aa).

Residue Asp-20 is part of the active site. Asp-20 lines the Mg(2+) pocket. Substrate-binding positions include 21 to 24 (GNGR), Trp-25, Arg-33, His-37, and 65 to 67 (SSE). The active-site Proton acceptor is Asn-68. Substrate is bound by residues Trp-69, Arg-71, Arg-188, and 194–196 (RIS). Residue Glu-207 participates in Mg(2+) binding.

Belongs to the UPP synthase family. Homodimer. It depends on Mg(2+) as a cofactor.

The catalysed reaction is 8 isopentenyl diphosphate + (2E,6E)-farnesyl diphosphate = di-trans,octa-cis-undecaprenyl diphosphate + 8 diphosphate. Functionally, catalyzes the sequential condensation of isopentenyl diphosphate (IPP) with (2E,6E)-farnesyl diphosphate (E,E-FPP) to yield (2Z,6Z,10Z,14Z,18Z,22Z,26Z,30Z,34E,38E)-undecaprenyl diphosphate (di-trans,octa-cis-UPP). UPP is the precursor of glycosyl carrier lipid in the biosynthesis of bacterial cell wall polysaccharide components such as peptidoglycan and lipopolysaccharide. The sequence is that of Ditrans,polycis-undecaprenyl-diphosphate synthase ((2E,6E)-farnesyl-diphosphate specific) from Vibrio cholerae serotype O1 (strain ATCC 39315 / El Tor Inaba N16961).